Reading from the N-terminus, the 778-residue chain is Dapper homolog 1 (778 aa).

Basic and acidic residues-rich tracts occupy residues 1–10 (MKPDAAREPE) and 18–40 (AEAE…TRER). Positions 1 to 40 (MKPDAAREPEPLSPGRGAEAEGRWRERGEADTERQRTRER) are disordered. A required for self-association region spans residues 85-149 (DAAQRSRLEE…SEEHLETDSR (65 aa)). Residues 85–149 (DAAQRSRLEE…SEEHLETDSR (65 aa)) adopt a coiled-coil conformation. The Nuclear export signal signature appears at 125–134 (LDKQISDLRL). Disordered regions lie at residues 305–324 (KTHP…DPTK), 359–386 (GGIT…QLES), 397–416 (AGAA…KAAS), 428–468 (ESMK…SQKN), 544–616 (EKPR…HKRT), and 694–721 (NCFG…SEES). Over residues 375–386 (RSKDSKTDQLES) the composition is skewed to basic and acidic residues. A compositionally biased stretch (polar residues) spans 432–443 (ESNQASAVSPKT). The short motif at 551-564 (KKCRFPDDSDTNKK) is the Bipartite nuclear localization signal element. A compositionally biased stretch (basic and acidic residues) spans 554-563 (RFPDDSDTNK). The segment covering 564–574 (KFRKTSAKGRR) has biased composition (basic residues). The segment covering 694-704 (NCFGDSESSVS) has biased composition (polar residues). The short motif at 768 to 778 (RSGSLKLMTTV) is the PDZ-binding element. Position 769 is a phosphoserine; by PKA (Ser-769).

It belongs to the dapper family. Can form homodimers and heterodimers with DACT2 or DACT3. Interacts with CSNK1D, PKA catalytic subunit, PKC-type kinase, CSNK2A1, CSNK2B, DVL1, DLV2, DVAL3, VANGL1, VANGL2, CTNND1 and HDAC1. Interacts with GSK3B; the interaction is indicative for an association of DACT1 with the beta-catenin destruction complex. Interacts with GSK3A. Interacts with YWHAB; the interaction is enhanced by PKA phosphorylating DACT1 at Ser-769. Interacts with CTNNB1. As to expression, expressed in multiple tissues including brain, heart, kidney, liver and testis.

The protein localises to the cytoplasm. The protein resides in the nucleus. It localises to the synapse. Involved in regulation of intracellular signaling pathways during development. Specifically thought to play a role in canonical and/or non-canonical Wnt signaling pathways through interaction with DSH (Dishevelled) family proteins. The activation/inhibition of Wnt signaling may depend on the phosphorylation status. Proposed to regulate the degradation of CTNNB1/beta-catenin, thereby modulating the transcriptional activation of target genes of the Wnt signaling pathway. Its function in stabilizing CTNNB1 may involve inhibition of GSK3B activity. Promotes the membrane localization of CTNNB1. The cytoplasmic form can induce DVL2 degradation via a lysosome-dependent mechanism; the function is inhibited by PKA-induced binding to 14-3-3 proteins, such as YWHAB. Seems to be involved in morphogenesis at the primitive streak by regulating VANGL2 and DVL2; the function seems to be independent of canonical Wnt signaling and rather involves the non-canonical Wnt/planar cell polarity (PCP) pathway. The nuclear form may prevent the formation of LEF1:CTNNB1 complex and recruit HDAC1 to LEF1 at target gene promoters to repress transcription thus antagonizing Wnt signaling. May be involved in positive regulation of fat cell differentiation. During neuronal differentiation may be involved in excitatory synapse organization, and dendrite formation and establishment of spines. This Mus musculus (Mouse) protein is Dapper homolog 1 (Dact1).